A 520-amino-acid polypeptide reads, in one-letter code: Putative cytochrome P450 CYP13A5 (520 aa).

Cysteine 464 contributes to the heme binding site.

This sequence belongs to the cytochrome P450 family. Heme is required as a cofactor.

Functionally, cytochromes P450 are a group of heme-thiolate monooxygenases. They oxidize a variety of structurally unrelated compounds, including steroids, fatty acids, and xenobiotics. This chain is Putative cytochrome P450 CYP13A5 (cyp-13A5), found in Caenorhabditis elegans.